We begin with the raw amino-acid sequence, 805 residues long: MWGVVMNVEEIEEEYKTSIKTGLSTEEAKKRLKIYGYNEIPEKKVHPIIKFLSYFWNPIAWMIEIAAILSAIIKHWVDFVIILILLLVNGVVGFWEEYKAENVIEFLKQKMALNARVLRDGKWQIIPAKELVPGDVVRIRIGDIVPADIILVDGDYLVVDESALTGESLPVEKKIGDIAYSGSIVKKGEMTGIVKATGLNTYFGKTVKLVEKAEKVSSYQKMIIKIGDYLIVLAVILIAIMVAVELFRGKSLIETAQFALVLAVSAIPAAMPAVLSITMAIGALNLAKKDAIVKKLVAIEELAGVDILCSDKTGTLTKNQLVCGEIIALNGFSKEDVVLFAALASREEDADAIDMAILNEAKKLGLMEKIKNYKIKKFIPFDPVIKRTEAEVTNDEEFKVSKGAPQVILDLCNADEELRRKVEEIVDKLAENGYRALGVAVYKNGRWHFAGIIPLYDPPREDAPLAVKKIKELGVIIKMVTGDHVAIAKNIARMLGIGDKIISISELLKKLKRGEIKEEKFDEIVEEADGFAEVFPEHKYKIVDSLQKRGHLVAMTGDGVNDAPALKKADCGIAVSNATDAARAAADIVLLSPGISVIVDAIQEARRIFQRMESYVIYRITETIRILFFVELCILILGIYPITALMIVLLAILNDIPILAIAYDNVVEPKSPVRWRMREILMLSTALGLSGVVSSFLIFYISDVFLHLTIAELQSFVFLKLILAGHATIFVTRIRDRLWKKPYPSKLLFWGVMGTNIIGTIVAAEGIFMAPIGWDLALFMWLYAHVWMLINDEIKMILLKRLKID.

The next 4 membrane-spanning stretches (helical) occupy residues Ser53 to Ile73, His75 to Trp95, Ile226 to Leu246, and Phe258 to Thr278. Asp311 (4-aspartylphosphate intermediate) is an active-site residue. A run of 6 helical transmembrane segments spans residues Tyr615 to Leu637, Pro641 to Tyr663, Ile680 to Tyr700, Glu712 to Ile734, Leu747 to Met769, and Gly773 to Ile790.

It belongs to the cation transport ATPase (P-type) (TC 3.A.3) family. Type IIIA subfamily.

It localises to the cell membrane. The enzyme catalyses ATP + H2O = ADP + phosphate + H(+). This chain is Putative cation-transporting ATPase MJ1226, found in Methanocaldococcus jannaschii (strain ATCC 43067 / DSM 2661 / JAL-1 / JCM 10045 / NBRC 100440) (Methanococcus jannaschii).